The chain runs to 421 residues: 4-hydroxy-3-methylbut-2-en-1-yl diphosphate synthase (flavodoxin) (421 aa).

4 residues coordinate [4Fe-4S] cluster: cysteine 298, cysteine 301, cysteine 344, and glutamate 351.

The protein belongs to the IspG family. Requires [4Fe-4S] cluster as cofactor.

It carries out the reaction (2E)-4-hydroxy-3-methylbut-2-enyl diphosphate + oxidized [flavodoxin] + H2O + 2 H(+) = 2-C-methyl-D-erythritol 2,4-cyclic diphosphate + reduced [flavodoxin]. Its pathway is isoprenoid biosynthesis; isopentenyl diphosphate biosynthesis via DXP pathway; isopentenyl diphosphate from 1-deoxy-D-xylulose 5-phosphate: step 5/6. Functionally, converts 2C-methyl-D-erythritol 2,4-cyclodiphosphate (ME-2,4cPP) into 1-hydroxy-2-methyl-2-(E)-butenyl 4-diphosphate. This is 4-hydroxy-3-methylbut-2-en-1-yl diphosphate synthase (flavodoxin) from Neisseria gonorrhoeae (strain ATCC 700825 / FA 1090).